A 635-amino-acid polypeptide reads, in one-letter code: 1-deoxy-D-xylulose-5-phosphate synthase (635 aa).

Thiamine diphosphate is bound by residues His74 and Ala115–Ser117. Mg(2+) is bound at residue Asp146. Residues Gly147–Ala148, Asn176, Tyr283, and Glu365 each bind thiamine diphosphate. Mg(2+) is bound at residue Asn176.

This sequence belongs to the transketolase family. DXPS subfamily. Homodimer. It depends on Mg(2+) as a cofactor. Requires thiamine diphosphate as cofactor.

It carries out the reaction D-glyceraldehyde 3-phosphate + pyruvate + H(+) = 1-deoxy-D-xylulose 5-phosphate + CO2. It participates in metabolic intermediate biosynthesis; 1-deoxy-D-xylulose 5-phosphate biosynthesis; 1-deoxy-D-xylulose 5-phosphate from D-glyceraldehyde 3-phosphate and pyruvate: step 1/1. Functionally, catalyzes the acyloin condensation reaction between C atoms 2 and 3 of pyruvate and glyceraldehyde 3-phosphate to yield 1-deoxy-D-xylulose-5-phosphate (DXP). This Paraburkholderia xenovorans (strain LB400) protein is 1-deoxy-D-xylulose-5-phosphate synthase.